Consider the following 1704-residue polypeptide: Villidin (1704 aa).

WD repeat units lie at residues 82–122 (GHTD…LIKD), 133–173 (KQQK…EQSS), 180–221 (GHED…TPIQ), and 225–271 (THEG…SSQP). 2 disordered regions span residues 439 to 460 (IGNS…DSPF) and 606 to 721 (SVPS…NSST). Gly residues predominate over residues 442 to 456 (SGSGGGGGDGDGNGG). Residues 459-563 (PFITEGIVKQ…WCQSINAYRE (105 aa)) form the PH 1 domain. Composition is skewed to low complexity over residues 613-636 (QQQQ…TPTQ), 651-701 (SLKS…SSSS), and 709-721 (NNST…NSST). PH domains follow at residues 727 to 828 (DIVI…QNLK) and 871 to 969 (EQPL…AARK). Residues 848 to 877 (LISSPMSDDESNTNEGGVEEEEEEQPLEGQ) are disordered. Positions 854–873 (SDDESNTNEGGVEEEEEEQP) are enriched in acidic residues. Gelsolin-like repeat units follow at residues 1025–1119 (KQKI…LGGN), 1138–1241 (IKTT…FANY), 1293–1390 (GRVK…FKTK), 1404–1494 (KKPS…FEST), and 1520–1615 (RFFV…FRAW). An HP domain is found at 1641 to 1704 (DYLKEIYTYE…EGIKKELFLF (64 aa)).

It is found in the membrane. The protein localises to the cytoplasm. Its subcellular location is the cytoskeleton. Functionally, may function as a linker between membranes and the actin cytoskeleton. The polypeptide is Villidin (vilA) (Dictyostelium discoideum (Social amoeba)).